The following is a 198-amino-acid chain: Nucleoid occlusion factor SlmA (198 aa).

One can recognise an HTH tetR-type domain in the interval 9–70; sequence RNRREEILQA…SLIEFIEDSL (62 aa). Residues 33–52 constitute a DNA-binding region (H-T-H motif); that stretch reads TTAKLAANVGVSEAALYRHF. Residues 113–144 adopt a coiled-coil conformation; that stretch reads ALMFEQDRLQDRINQLFERIESQLRQVLREHK.

The protein belongs to the nucleoid occlusion factor SlmA family. Homodimer. Interacts with FtsZ.

The protein resides in the cytoplasm. It localises to the nucleoid. In terms of biological role, required for nucleoid occlusion (NO) phenomenon, which prevents Z-ring formation and cell division over the nucleoid. Acts as a DNA-associated cell division inhibitor that binds simultaneously chromosomal DNA and FtsZ, and disrupts the assembly of FtsZ polymers. SlmA-DNA-binding sequences (SBS) are dispersed on non-Ter regions of the chromosome, preventing FtsZ polymerization at these regions. This chain is Nucleoid occlusion factor SlmA, found in Pectobacterium carotovorum subsp. carotovorum (strain PC1).